A 470-amino-acid chain; its full sequence is tRNA modification GTPase MnmE (470 aa).

Residues Lys-27, Glu-90, and Arg-129 each coordinate (6S)-5-formyl-5,6,7,8-tetrahydrofolate. Residues 231-391 (GVSLVLAGKP…LRDFLNQRFL (161 aa)) enclose the TrmE-type G domain. Residues 241–246 (NVGKSS), 260–266 (TPFPGTT), and 285–288 (DTAG) contribute to the GTP site. Mg(2+) is bound by residues Ser-245 and Thr-266. Lys-470 contacts (6S)-5-formyl-5,6,7,8-tetrahydrofolate.

Belongs to the TRAFAC class TrmE-Era-EngA-EngB-Septin-like GTPase superfamily. TrmE GTPase family. As to quaternary structure, homodimer. Heterotetramer of two MnmE and two MnmG subunits. K(+) serves as cofactor.

The protein localises to the cytoplasm. In terms of biological role, exhibits a very high intrinsic GTPase hydrolysis rate. Involved in the addition of a carboxymethylaminomethyl (cmnm) group at the wobble position (U34) of certain tRNAs, forming tRNA-cmnm(5)s(2)U34. The sequence is that of tRNA modification GTPase MnmE from Syntrophobacter fumaroxidans (strain DSM 10017 / MPOB).